Consider the following 397-residue polypeptide: Acetate kinase (397 aa).

A Mg(2+)-binding site is contributed by asparagine 8. Lysine 15 serves as a coordination point for ATP. Arginine 89 serves as a coordination point for substrate. The active-site Proton donor/acceptor is aspartate 146. Residues 206–210 (HVGNG), 283–285 (DMR), and 331–335 (GMGEN) contribute to the ATP site. Glutamate 383 contributes to the Mg(2+) binding site.

This sequence belongs to the acetokinase family. In terms of assembly, homodimer. Mg(2+) serves as cofactor. The cofactor is Mn(2+).

Its subcellular location is the cytoplasm. It catalyses the reaction acetate + ATP = acetyl phosphate + ADP. Its pathway is metabolic intermediate biosynthesis; acetyl-CoA biosynthesis; acetyl-CoA from acetate: step 1/2. Catalyzes the formation of acetyl phosphate from acetate and ATP. Can also catalyze the reverse reaction. The sequence is that of Acetate kinase from Streptococcus agalactiae serotype Ia (strain ATCC 27591 / A909 / CDC SS700).